The sequence spans 467 residues: Chromosomal replication initiator protein DnaA (467 aa).

Residues 1–85 are domain I, interacts with DnaA modulators; the sequence is MSLSLWQQCL…FEVGAKPASS (85 aa). The segment at 85 to 130 is domain II; it reads SLQKGAVSPAAAAIPAAQVQTARVAPTIVRPGWDNVPAPAEPTYRS. The interval 131 to 347 is domain III, AAA+ region; the sequence is NVNVKHTFDN…GALNRVIANA (217 aa). ATP is bound by residues Gly-175, Gly-177, Lys-178, and Thr-179. The tract at residues 348–467 is domain IV, binds dsDNA; the sequence is NFTGRAITID…FSNLIRTLSS (120 aa).

This sequence belongs to the DnaA family. As to quaternary structure, oligomerizes as a right-handed, spiral filament on DNA at oriC.

Its subcellular location is the cytoplasm. Its function is as follows. Plays an essential role in the initiation and regulation of chromosomal replication. ATP-DnaA binds to the origin of replication (oriC) to initiate formation of the DNA replication initiation complex once per cell cycle. Binds the DnaA box (a 9 base pair repeat at the origin) and separates the double-stranded (ds)DNA. Forms a right-handed helical filament on oriC DNA; dsDNA binds to the exterior of the filament while single-stranded (ss)DNA is stabiized in the filament's interior. The ATP-DnaA-oriC complex binds and stabilizes one strand of the AT-rich DNA unwinding element (DUE), permitting loading of DNA polymerase. After initiation quickly degrades to an ADP-DnaA complex that is not apt for DNA replication. Binds acidic phospholipids. The chain is Chromosomal replication initiator protein DnaA from Klebsiella pneumoniae (strain 342).